A 188-amino-acid polypeptide reads, in one-letter code: Acireductone dioxygenase (188 aa).

The Fe(2+) site is built by His-97, His-99, Glu-103, and His-141. 4 residues coordinate Ni(2+): His-97, His-99, Glu-103, and His-141.

Belongs to the acireductone dioxygenase (ARD) family. As to quaternary structure, monomer. Requires Fe(2+) as cofactor. Ni(2+) is required as a cofactor.

It carries out the reaction 1,2-dihydroxy-5-(methylsulfanyl)pent-1-en-3-one + O2 = 3-(methylsulfanyl)propanoate + CO + formate + 2 H(+). The catalysed reaction is 1,2-dihydroxy-5-(methylsulfanyl)pent-1-en-3-one + O2 = 4-methylsulfanyl-2-oxobutanoate + formate + 2 H(+). It participates in amino-acid biosynthesis; L-methionine biosynthesis via salvage pathway; L-methionine from S-methyl-5-thio-alpha-D-ribose 1-phosphate: step 5/6. Functionally, catalyzes 2 different reactions between oxygen and the acireductone 1,2-dihydroxy-3-keto-5-methylthiopentene (DHK-MTPene) depending upon the metal bound in the active site. Fe-containing acireductone dioxygenase (Fe-ARD) produces formate and 2-keto-4-methylthiobutyrate (KMTB), the alpha-ketoacid precursor of methionine in the methionine recycle pathway. Ni-containing acireductone dioxygenase (Ni-ARD) produces methylthiopropionate, carbon monoxide and formate, and does not lie on the methionine recycle pathway. The chain is Acireductone dioxygenase from Xanthomonas axonopodis pv. citri (strain 306).